Reading from the N-terminus, the 572-residue chain is Ribonuclease Y (572 aa).

Residues 1 to 21 (MPTLYVILSLLLGLIGGVLVQ) form a helical membrane-spanning segment. Disordered regions lie at residues 59-85 (HEAAEQDRQDAISKTQDAARRVQDAAE) and 110-142 (QLEAEREQAKADAAQQREALSTDRQETRRERED). Basic and acidic residues-rich tracts occupy residues 110–119 (QLEAEREQAK) and 129–142 (LSTDRQETRRERED). One can recognise a KH domain in the interval 262-322 (SVSVVPIPSD…LRREVARHVL (61 aa)). The HD domain occupies 388–481 (VLKHSVQVAH…VAAADAISAA (94 aa)).

The protein belongs to the RNase Y family.

The protein resides in the cell membrane. Functionally, endoribonuclease that initiates mRNA decay. The sequence is that of Ribonuclease Y from Deinococcus radiodurans (strain ATCC 13939 / DSM 20539 / JCM 16871 / CCUG 27074 / LMG 4051 / NBRC 15346 / NCIMB 9279 / VKM B-1422 / R1).